Here is a 91-residue protein sequence, read N- to C-terminus: Putative septation protein SpoVG (91 aa).

It belongs to the SpoVG family.

Could be involved in septation. The protein is Putative septation protein SpoVG of Clostridium beijerinckii (strain ATCC 51743 / NCIMB 8052) (Clostridium acetobutylicum).